The following is a 644-amino-acid chain: 3-isopropylmalate dehydratase (644 aa).

Residues Cys400, Cys460, and Cys463 each contribute to the [4Fe-4S] cluster site. A disordered region spans residues 521 to 568 (SEIPGTPKQSPRQEVVAEFESEEDDVDSSSVDSAPVATPPSTGDSAGM). Over residues 537-547 (AEFESEEDDVD) the composition is skewed to acidic residues.

Belongs to the aconitase/IPM isomerase family. In terms of assembly, monomer. It depends on [4Fe-4S] cluster as a cofactor.

The catalysed reaction is (2R,3S)-3-isopropylmalate = (2S)-2-isopropylmalate. It participates in amino-acid biosynthesis; L-leucine biosynthesis; L-leucine from 3-methyl-2-oxobutanoate: step 2/4. Functionally, catalyzes the isomerization between 2-isopropylmalate and 3-isopropylmalate, via the formation of 2-isopropylmaleate. In Mucor circinelloides f. lusitanicus (Mucor racemosus var. lusitanicus), this protein is 3-isopropylmalate dehydratase (LEUA).